Consider the following 222-residue polypeptide: uncharacterized protein (222 aa).

The interval 142 to 222 is disordered; it reads ARRGGCVHPP…LPDPPSAGHL (81 aa). The span at 160 to 169 shows a compositional bias: low complexity; it reads QSRSISSRRA. A compositionally biased stretch (basic residues) spans 182–196; the sequence is PRRRPHRHRTRPQTR.

The protein belongs to the Rv1128c/1148c/1588c/1702c/1945/3466 family.

This is an uncharacterized protein from Mycobacterium tuberculosis (strain CDC 1551 / Oshkosh).